The following is a 413-amino-acid chain: Variant surface glycoprotein YnAT 1.3 (413 aa).

The N-terminal stretch at 1–22 (MLDNSRARSIVHLLILLKAHVI) is a signal peptide. N-linked (GlcNAc...) asparagine glycosylation is found at N91, N361, and N379. Residue N379 is the site of GPI-anchor amidated asparagine attachment. The propeptide at 380–413 (SSNPTSRQNSVVQEPTTVSAAAITPLILPWTLLI) is removed in mature form.

Its subcellular location is the cell membrane. In terms of biological role, VSG forms a coat on the surface of the parasite. The trypanosome evades the immune response of the host by expressing a series of antigenically distinct VSGs from an estimated 1000 VSG genes. The chain is Variant surface glycoprotein YnAT 1.3 from Trypanosoma congolense.